Reading from the N-terminus, the 252-residue chain is MLTKRIIPCLDVKGGRVVKGVQFLGLRDAGDPVEIAELYDQQGADELTFLDITASSDDRDIIIDVVRRTAERVFMPLTVGGGVRVVEDIRRLLNAGADKVSINTAAVHRPEFVSEAAEKFGSQCTVVAIDARSRAGGGWEVYTHGGRNPTGIDAVEWAQRMEGMGAGEILLTSMDRDGTKDGYDLPLTRAVVDAVSIPVIASGGVGGLSHLYDGFTQAGASACLAASIFHYREYTIEEAKSYLRERGVPVRL.

Residues aspartate 11 and aspartate 130 contribute to the active site.

This sequence belongs to the HisA/HisF family. Heterodimer of HisH and HisF.

It localises to the cytoplasm. The enzyme catalyses 5-[(5-phospho-1-deoxy-D-ribulos-1-ylimino)methylamino]-1-(5-phospho-beta-D-ribosyl)imidazole-4-carboxamide + L-glutamine = D-erythro-1-(imidazol-4-yl)glycerol 3-phosphate + 5-amino-1-(5-phospho-beta-D-ribosyl)imidazole-4-carboxamide + L-glutamate + H(+). The protein operates within amino-acid biosynthesis; L-histidine biosynthesis; L-histidine from 5-phospho-alpha-D-ribose 1-diphosphate: step 5/9. IGPS catalyzes the conversion of PRFAR and glutamine to IGP, AICAR and glutamate. The HisF subunit catalyzes the cyclization activity that produces IGP and AICAR from PRFAR using the ammonia provided by the HisH subunit. This is Imidazole glycerol phosphate synthase subunit HisF from Citrifermentans bemidjiense (strain ATCC BAA-1014 / DSM 16622 / JCM 12645 / Bem) (Geobacter bemidjiensis).